We begin with the raw amino-acid sequence, 419 residues long: L-rhamnose isomerase (419 aa).

Histidine 262, aspartate 294, and aspartate 296 together coordinate Mn(2+).

The protein belongs to the rhamnose isomerase family. Homotetramer. It depends on Mn(2+) as a cofactor.

It localises to the cytoplasm. It carries out the reaction L-rhamnopyranose = L-rhamnulose. It functions in the pathway carbohydrate degradation; L-rhamnose degradation; glycerone phosphate from L-rhamnose: step 1/3. Catalyzes the interconversion of L-rhamnose and L-rhamnulose. In Escherichia fergusonii (strain ATCC 35469 / DSM 13698 / CCUG 18766 / IAM 14443 / JCM 21226 / LMG 7866 / NBRC 102419 / NCTC 12128 / CDC 0568-73), this protein is L-rhamnose isomerase.